Reading from the N-terminus, the 181-residue chain is MTMELESQEVVVETTTAAAAARAASAAHVRTTVALRLLAFAASLAAAVVVATNRQERWGITVTFKMFAVWEAFVAINFACAAYALLTAVFVKKLVSKHWLHHMDQFTVNLQAASTAGAGAVGSVAMWGNEPSGWYAVCRLYRLYCDRGAVSLALAFVAFVAFGVASSLSRYPRAPPPPAPR.

The Cytoplasmic segment spans residues 1–30 (MTMELESQEVVVETTTAAAAARAASAAHVR). Residues 31–51 (TTVALRLLAFAASLAAAVVVA) traverse the membrane as a helical segment. Residues 52 to 65 (TNRQERWGITVTFK) lie on the Extracellular side of the membrane. The helical transmembrane segment at 66–86 (MFAVWEAFVAINFACAAYALL) threads the bilayer. Over 87–107 (TAVFVKKLVSKHWLHHMDQFT) the chain is Cytoplasmic. The helical transmembrane segment at 108–128 (VNLQAASTAGAGAVGSVAMWG) threads the bilayer. Residues 129-147 (NEPSGWYAVCRLYRLYCDR) lie on the Extracellular side of the membrane. Residues 148–168 (GAVSLALAFVAFVAFGVASSL) form a helical membrane-spanning segment. Residues 169 to 181 (SRYPRAPPPPAPR) are Cytoplasmic-facing.

It belongs to the Casparian strip membrane proteins (CASP) family. As to quaternary structure, homodimer and heterodimers.

It is found in the cell membrane. The chain is CASP-like protein UU-1 from Sorghum bicolor (Sorghum).